Reading from the N-terminus, the 370-residue chain is Aminomethyltransferase (370 aa).

Belongs to the GcvT family. The glycine cleavage system is composed of four proteins: P, T, L and H.

The catalysed reaction is N(6)-[(R)-S(8)-aminomethyldihydrolipoyl]-L-lysyl-[protein] + (6S)-5,6,7,8-tetrahydrofolate = N(6)-[(R)-dihydrolipoyl]-L-lysyl-[protein] + (6R)-5,10-methylene-5,6,7,8-tetrahydrofolate + NH4(+). The glycine cleavage system catalyzes the degradation of glycine. In Clostridium botulinum (strain Okra / Type B1), this protein is Aminomethyltransferase.